Consider the following 233-residue polypeptide: 2-C-methyl-D-erythritol 4-phosphate cytidylyltransferase (233 aa).

The protein belongs to the IspD/TarI cytidylyltransferase family. IspD subfamily.

It carries out the reaction 2-C-methyl-D-erythritol 4-phosphate + CTP + H(+) = 4-CDP-2-C-methyl-D-erythritol + diphosphate. It functions in the pathway isoprenoid biosynthesis; isopentenyl diphosphate biosynthesis via DXP pathway; isopentenyl diphosphate from 1-deoxy-D-xylulose 5-phosphate: step 2/6. Its function is as follows. Catalyzes the formation of 4-diphosphocytidyl-2-C-methyl-D-erythritol from CTP and 2-C-methyl-D-erythritol 4-phosphate (MEP). The polypeptide is 2-C-methyl-D-erythritol 4-phosphate cytidylyltransferase (Carboxydothermus hydrogenoformans (strain ATCC BAA-161 / DSM 6008 / Z-2901)).